Here is a 339-residue protein sequence, read N- to C-terminus: Phenylalanine--tRNA ligase alpha subunit (339 aa).

Glu-262 contributes to the Mg(2+) binding site.

The protein belongs to the class-II aminoacyl-tRNA synthetase family. Phe-tRNA synthetase alpha subunit type 1 subfamily. As to quaternary structure, tetramer of two alpha and two beta subunits. The cofactor is Mg(2+).

It localises to the cytoplasm. It carries out the reaction tRNA(Phe) + L-phenylalanine + ATP = L-phenylalanyl-tRNA(Phe) + AMP + diphosphate + H(+). The chain is Phenylalanine--tRNA ligase alpha subunit from Neisseria gonorrhoeae (strain ATCC 700825 / FA 1090).